Consider the following 1819-residue polypeptide: U3 small nucleolar RNA-associated protein 10 (1819 aa).

The stretch at 583 to 620 is one HEAT 1 repeat; that stretch reads LDFQAILPFLLVALADPSERIRREAAAALAAIGGIYKK. 2 helical membrane passes run 945–965 and 1001–1021; these read IQSG…AIVN and ALLL…HSVM. HEAT repeat units lie at residues 1045-1082, 1269-1306, 1313-1351, and 1775-1812; these read QTID…AFEH, LTLV…QNPE, IRVL…KYGK, and ALLP…VLGE.

Belongs to the HEATR1/UTP10 family. As to quaternary structure, component of the ribosomal small subunit (SSU) processome.

Its subcellular location is the nucleus. The protein localises to the nucleolus. It is found in the membrane. Involved in nucleolar processing of pre-18S ribosomal RNA. Involved in ribosome biosynthesis. The protein is U3 small nucleolar RNA-associated protein 10 of Aspergillus clavatus (strain ATCC 1007 / CBS 513.65 / DSM 816 / NCTC 3887 / NRRL 1 / QM 1276 / 107).